Consider the following 161-residue polypeptide: Ribosome maturation factor RimP (161 aa).

It belongs to the RimP family.

It localises to the cytoplasm. In terms of biological role, required for maturation of 30S ribosomal subunits. The chain is Ribosome maturation factor RimP from Herminiimonas arsenicoxydans.